The primary structure comprises 381 residues: Creatine kinase B-type (381 aa).

S4 carries the phosphoserine modification. The region spanning 11–98 (KLRFPAEDEF…FDPIIEDRHG (88 aa)) is the Phosphagen kinase N-terminal domain. T35 is subject to Phosphothreonine. K45 is covalently cross-linked (Glycyl lysine isopeptide (Lys-Gly) (interchain with G-Cter in ubiquitin)). Residue V72 participates in creatine binding. Residues 96–110 (RHGGYKPSDEHKTDL) are compositionally biased toward basic and acidic residues. Residues 96–122 (RHGGYKPSDEHKTDLNPDNLQGGDDLD) form a disordered region. Residues K101 and K107 each participate in a glycyl lysine isopeptide (Lys-Gly) (interchain with G-Cter in ubiquitin) cross-link. Position 125 is a phosphotyrosine (Y125). The region spanning 125–367 (YVLSSRVRTG…KLLIEMEQRL (243 aa)) is the Phosphagen kinase C-terminal domain. ATP-binding positions include 128–132 (SSRVR), R130, R132, and H191. The tract at residues 130 to 138 (RVRTGRSIR) is internal MTS-like signal. A Phosphoserine modification is found at S199. E232 is a creatine binding site. Residue R236 participates in ATP binding. The residue at position 269 (Y269) is a 3'-nitrotyrosine. S285 lines the creatine pocket. Residue R292 participates in ATP binding. S309 bears the Phosphoserine mark. Residues R320, 320–325 (RGTGGV), and D335 each bind ATP. A Phosphothreonine modification is found at T322. K381 is covalently cross-linked (Glycyl lysine isopeptide (Lys-Gly) (interchain with G-Cter in ubiquitin)).

It belongs to the ATP:guanido phosphotransferase family. In terms of assembly, dimer of identical or non-identical chains, which can be either B (brain type) or M (muscle type). With MM being the major form in skeletal muscle and myocardium, MB existing in myocardium, and BB existing in many tissues, especially brain. Interacts with SLC12A6 (via C-terminus); the interaction may be required for SLC12A6 potassium-chloride cotransport activity. In terms of processing, ubiquitinated by the ECS(ASB9) complex, leading to its degradation by the proteasome.

It localises to the cytoplasm. The protein localises to the cytosol. The protein resides in the mitochondrion. It is found in the cell membrane. It catalyses the reaction creatine + ATP = N-phosphocreatine + ADP + H(+). Its function is as follows. Reversibly catalyzes the transfer of phosphate between ATP and various phosphogens (e.g. creatine phosphate). Creatine kinase isoenzymes play a central role in energy transduction in tissues with large, fluctuating energy demands, such as skeletal muscle, heart, brain and spermatozoa. Acts as a key regulator of adaptive thermogenesis as part of the futile creatine cycle: localizes to the mitochondria of thermogenic fat cells and acts by mediating phosphorylation of creatine to initiate a futile cycle of creatine phosphorylation and dephosphorylation. During the futile creatine cycle, creatine and N-phosphocreatine are in a futile cycle, which dissipates the high energy charge of N-phosphocreatine as heat without performing any mechanical or chemical work. This chain is Creatine kinase B-type, found in Homo sapiens (Human).